The primary structure comprises 437 residues: Glutamate-1-semialdehyde 2,1-aminomutase (437 aa).

K277 is modified (N6-(pyridoxal phosphate)lysine).

It belongs to the class-III pyridoxal-phosphate-dependent aminotransferase family. HemL subfamily. As to quaternary structure, homodimer. The cofactor is pyridoxal 5'-phosphate.

The protein localises to the cytoplasm. It carries out the reaction (S)-4-amino-5-oxopentanoate = 5-aminolevulinate. It functions in the pathway porphyrin-containing compound metabolism; protoporphyrin-IX biosynthesis; 5-aminolevulinate from L-glutamyl-tRNA(Glu): step 2/2. Its pathway is porphyrin-containing compound metabolism; chlorophyll biosynthesis. The chain is Glutamate-1-semialdehyde 2,1-aminomutase from Thermosynechococcus vestitus (strain NIES-2133 / IAM M-273 / BP-1).